A 61-amino-acid polypeptide reads, in one-letter code: Small ribosomal subunit protein uS14 (61 aa).

Zn(2+)-binding residues include cysteine 24, cysteine 27, cysteine 40, and cysteine 43.

This sequence belongs to the universal ribosomal protein uS14 family. Zinc-binding uS14 subfamily. As to quaternary structure, part of the 30S ribosomal subunit. Contacts proteins S3 and S10. Zn(2+) serves as cofactor.

Its function is as follows. Binds 16S rRNA, required for the assembly of 30S particles and may also be responsible for determining the conformation of the 16S rRNA at the A site. The chain is Small ribosomal subunit protein uS14 from Nautilia profundicola (strain ATCC BAA-1463 / DSM 18972 / AmH).